A 102-amino-acid chain; its full sequence is Acid shock protein (102 aa).

The N-terminal stretch at 1–21 is a signal peptide; that stretch reads MKKVLALVVAAAMGLSSAAFA. Positions 22–58 are excised as a propeptide; sequence AETAITPAPTATTTKAAPAKTTHHKKQHKAAPAQKAQ. Over residues 26–41 the composition is skewed to low complexity; sequence ITPAPTATTTKAAPAK. Residues 26–102 form a disordered region; the sequence is ITPAPTATTT…PAKPAAQPAA (77 aa). Over residues 80-90 the composition is skewed to basic residues; sequence AAKKHAKKHSH. Low complexity predominate over residues 91–102; it reads QQPAKPAAQPAA.

Belongs to the Asr family. Post-translationally, proteolytic processing gives rise to the active protein.

The protein resides in the periplasm. Its function is as follows. Required for growth and/or survival at acidic conditions. The protein is Acid shock protein of Escherichia coli O81 (strain ED1a).